Here is a 509-residue protein sequence, read N- to C-terminus: Kynureninase 1 (509 aa).

Residues leucine 169, threonine 170, 197 to 200 (FPSD), aspartate 283, histidine 286, and tyrosine 308 each bind pyridoxal 5'-phosphate. Lysine 309 is subject to N6-(pyridoxal phosphate)lysine. Pyridoxal 5'-phosphate-binding residues include tryptophan 349 and asparagine 377.

It belongs to the kynureninase family. In terms of assembly, homodimer. It depends on pyridoxal 5'-phosphate as a cofactor.

The protein localises to the cytoplasm. The catalysed reaction is L-kynurenine + H2O = anthranilate + L-alanine + H(+). It catalyses the reaction 3-hydroxy-L-kynurenine + H2O = 3-hydroxyanthranilate + L-alanine + H(+). It functions in the pathway amino-acid degradation; L-kynurenine degradation; L-alanine and anthranilate from L-kynurenine: step 1/1. The protein operates within cofactor biosynthesis; NAD(+) biosynthesis; quinolinate from L-kynurenine: step 2/3. Functionally, catalyzes the cleavage of L-kynurenine (L-Kyn) and L-3-hydroxykynurenine (L-3OHKyn) into anthranilic acid (AA) and 3-hydroxyanthranilic acid (3-OHAA), respectively. The protein is Kynureninase 1 (bna5-1) of Aspergillus fumigatus (strain CBS 144.89 / FGSC A1163 / CEA10) (Neosartorya fumigata).